The following is a 317-amino-acid chain: Beta-ketoacyl-[acyl-carrier-protein] synthase III (317 aa).

Active-site residues include Cys-112 and His-244. An ACP-binding region spans residues 245-249 (QANIR). The active site involves Asn-274.

This sequence belongs to the thiolase-like superfamily. FabH family. As to quaternary structure, homodimer.

It localises to the cytoplasm. The enzyme catalyses malonyl-[ACP] + acetyl-CoA + H(+) = 3-oxobutanoyl-[ACP] + CO2 + CoA. It participates in lipid metabolism; fatty acid biosynthesis. Catalyzes the condensation reaction of fatty acid synthesis by the addition to an acyl acceptor of two carbons from malonyl-ACP. Catalyzes the first condensation reaction which initiates fatty acid synthesis and may therefore play a role in governing the total rate of fatty acid production. Possesses both acetoacetyl-ACP synthase and acetyl transacylase activities. Its substrate specificity determines the biosynthesis of branched-chain and/or straight-chain of fatty acids. This chain is Beta-ketoacyl-[acyl-carrier-protein] synthase III, found in Rickettsia akari (strain Hartford).